The following is a 303-amino-acid chain: Bifunctional protein FolD (303 aa).

NADP(+) contacts are provided by residues 175–177 (GVS) and Ile243.

It belongs to the tetrahydrofolate dehydrogenase/cyclohydrolase family. Homodimer.

It catalyses the reaction (6R)-5,10-methylene-5,6,7,8-tetrahydrofolate + NADP(+) = (6R)-5,10-methenyltetrahydrofolate + NADPH. The catalysed reaction is (6R)-5,10-methenyltetrahydrofolate + H2O = (6R)-10-formyltetrahydrofolate + H(+). Its pathway is one-carbon metabolism; tetrahydrofolate interconversion. Its function is as follows. Catalyzes the oxidation of 5,10-methylenetetrahydrofolate to 5,10-methenyltetrahydrofolate and then the hydrolysis of 5,10-methenyltetrahydrofolate to 10-formyltetrahydrofolate. The sequence is that of Bifunctional protein FolD from Xanthomonas axonopodis pv. citri (strain 306).